We begin with the raw amino-acid sequence, 262 residues long: Adenosylcobinamide-GDP ribazoletransferase (262 aa).

Transmembrane regions (helical) follow at residues Tyr-43 to Gln-63, Leu-66 to Phe-86, Gly-120 to Leu-140, Ala-146 to Phe-166, Leu-191 to Leu-211, and Ala-242 to Leu-262.

The protein belongs to the CobS family. Mg(2+) is required as a cofactor.

The protein localises to the cell inner membrane. It carries out the reaction alpha-ribazole + adenosylcob(III)inamide-GDP = adenosylcob(III)alamin + GMP + H(+). The catalysed reaction is alpha-ribazole 5'-phosphate + adenosylcob(III)inamide-GDP = adenosylcob(III)alamin 5'-phosphate + GMP + H(+). Its pathway is cofactor biosynthesis; adenosylcobalamin biosynthesis; adenosylcobalamin from cob(II)yrinate a,c-diamide: step 7/7. In terms of biological role, joins adenosylcobinamide-GDP and alpha-ribazole to generate adenosylcobalamin (Ado-cobalamin). Also synthesizes adenosylcobalamin 5'-phosphate from adenosylcobinamide-GDP and alpha-ribazole 5'-phosphate. The chain is Adenosylcobinamide-GDP ribazoletransferase from Shewanella oneidensis (strain ATCC 700550 / JCM 31522 / CIP 106686 / LMG 19005 / NCIMB 14063 / MR-1).